We begin with the raw amino-acid sequence, 148 residues long: uncharacterized protein (148 aa).

The N-terminal stretch at 1-19 (MLSNAKLLLSLAMASTALG) is a signal peptide. N-linked (GlcNAc...) asparagine glycans are attached at residues Asn-41 and Asn-59. Asn-127 carries GPI-anchor amidated asparagine lipidation. The propeptide at 128–148 (AANARAIPGALGLAGAVMMLL) is removed in mature form.

The protein belongs to the SED1 family. The GPI-anchor is attached to the protein in the endoplasmic reticulum and serves to target the protein to the cell surface. There, the glucosamine-inositol phospholipid moiety is cleaved off and the GPI-modified mannoprotein is covalently attached via its lipidless GPI glycan remnant to the 1,6-beta-glucan of the outer cell wall layer.

It localises to the secreted. Its subcellular location is the cell wall. The protein resides in the membrane. In terms of biological role, cell wall protein that plays a role in adaptation and resistance to cell wall stress. This is an uncharacterized protein from Saccharomyces cerevisiae (strain ATCC 204508 / S288c) (Baker's yeast).